Here is a 374-residue protein sequence, read N- to C-terminus: Putative L-lysine 2,3-aminomutase aq_1632 (374 aa).

The region spanning 86-314 is the Radical SAM core domain; sequence HKYPDTALLL…ARVRYVMSHE (229 aa). Residues Cys100, Cys104, and Cys107 each coordinate [4Fe-4S] cluster. N6-(pyridoxal phosphate)lysine is present on Lys317.

This sequence belongs to the radical SAM superfamily. KamA family. [4Fe-4S] cluster is required as a cofactor. Pyridoxal 5'-phosphate serves as cofactor.

This chain is Putative L-lysine 2,3-aminomutase aq_1632, found in Aquifex aeolicus (strain VF5).